Here is a 250-residue protein sequence, read N- to C-terminus: 3-deoxy-manno-octulosonate cytidylyltransferase (250 aa).

The protein belongs to the KdsB family.

It is found in the cytoplasm. It carries out the reaction 3-deoxy-alpha-D-manno-oct-2-ulosonate + CTP = CMP-3-deoxy-beta-D-manno-octulosonate + diphosphate. It participates in nucleotide-sugar biosynthesis; CMP-3-deoxy-D-manno-octulosonate biosynthesis; CMP-3-deoxy-D-manno-octulosonate from 3-deoxy-D-manno-octulosonate and CTP: step 1/1. Its pathway is bacterial outer membrane biogenesis; lipopolysaccharide biosynthesis. Its function is as follows. Activates KDO (a required 8-carbon sugar) for incorporation into bacterial lipopolysaccharide in Gram-negative bacteria. This Cytophaga hutchinsonii (strain ATCC 33406 / DSM 1761 / CIP 103989 / NBRC 15051 / NCIMB 9469 / D465) protein is 3-deoxy-manno-octulosonate cytidylyltransferase.